The primary structure comprises 144 residues: Large ribosomal subunit protein uL15 (144 aa).

The disordered stretch occupies residues 1 to 48 (MIKLEYLQDPSPRKRRTKLLGRGPSSGHGKTSGRGHKGDGSRSGYKRR).

Belongs to the universal ribosomal protein uL15 family. As to quaternary structure, part of the 50S ribosomal subunit.

Its function is as follows. Binds to the 23S rRNA. The protein is Large ribosomal subunit protein uL15 of Chlamydia muridarum (strain MoPn / Nigg).